Reading from the N-terminus, the 355-residue chain is Glycerol-3-phosphate dehydrogenase [NAD(P)+] (355 aa).

The NADPH site is built by Ser14, Trp15, Arg35, and Lys117. Positions 117, 147, and 149 each coordinate sn-glycerol 3-phosphate. Residue Ala151 coordinates NADPH. 5 residues coordinate sn-glycerol 3-phosphate: Lys202, Asp255, Ser265, Arg266, and Asn267. Catalysis depends on Lys202, which acts as the Proton acceptor. NADPH is bound at residue Arg266. Residues Ile290 and Glu292 each coordinate NADPH.

The protein belongs to the NAD-dependent glycerol-3-phosphate dehydrogenase family.

It localises to the cytoplasm. The enzyme catalyses sn-glycerol 3-phosphate + NAD(+) = dihydroxyacetone phosphate + NADH + H(+). It catalyses the reaction sn-glycerol 3-phosphate + NADP(+) = dihydroxyacetone phosphate + NADPH + H(+). Its pathway is membrane lipid metabolism; glycerophospholipid metabolism. Catalyzes the reduction of the glycolytic intermediate dihydroxyacetone phosphate (DHAP) to sn-glycerol 3-phosphate (G3P), the key precursor for phospholipid synthesis. The polypeptide is Glycerol-3-phosphate dehydrogenase [NAD(P)+] (Lawsonia intracellularis (strain PHE/MN1-00)).